Consider the following 1554-residue polypeptide: Myosin-2 (1554 aa).

The Myosin N-terminal SH3-like domain occupies 4–57 (EVGTRCWYPDKQQGWIGGEITKHTNLSNKHQLELTLEDNQIVEIESETLDETKD). The Myosin motor domain occupies 70-774 (EATEDLTSLS…MLAYLEKLRS (705 aa)). ATP is bound at residue 164–171 (GESGAGKT). Residues 443-523 (FIGVLDIYGF…LGILSLLDEE (81 aa)) are actin-binding. IQ domains are found at residues 778-798 (HNSSVLIQKKVKAVYYRKKYL), 800-824 (IISSIRNFHSRSEGFLTRQRVDLEF), 825-847 (KTQAAILIQSMVRSTSTRNKTIS), 848-872 (LLSAITRLQSLVRKQLAQKELLQRR), 873-895 (QRDAAVSIQKKIRAFEPRQSFNT), and 896-925 (TRRSTVVVQSLVRKKFAQKKLKDLKTEAKS). Positions 926–1079 (VNHLKEVSYK…IARLQAAVRS (154 aa)) form a coiled coil. The interval 1080–1554 (GVTSSTITST…VTVQESQRTE (475 aa)) is non alpha-helical, tail domain. Positions 1082–1093 (TSSTITSTPTAS) are enriched in low complexity. The interval 1082 to 1109 (TSSTITSTPTASRRFSAHSSVADGTSPR) is disordered. The segment covering 1098-1109 (AHSSVADGTSPR) has biased composition (polar residues). The Dilute domain occupies 1205–1480 (AEVLSTIQKL…LNFVADRVKK (276 aa)).

The protein belongs to the TRAFAC class myosin-kinesin ATPase superfamily. Myosin family. As to quaternary structure, homodimer. Interacts with calmodulin (CMD1) and the myosin light chain MLC1 through its IQ repeats.

Its function is as follows. Myosin heavy chain that is required for the cell cycle-regulated transport of various organelles and proteins for their segregation. Functions by binding with its tail domain to receptor proteins on organelles and exerting force with its N-terminal motor domain against actin filaments, thereby transporting its cargo along polarized actin cables. This chain is Myosin-2 (MYO2), found in Lachancea kluyveri (strain ATCC 58438 / CBS 3082 / BCRC 21498 / NBRC 1685 / JCM 7257 / NCYC 543 / NRRL Y-12651) (Yeast).